Here is a 257-residue protein sequence, read N- to C-terminus: Pimeloyl-[acyl-carrier protein] methyl ester esterase (257 aa).

The AB hydrolase-1 domain occupies 15–241 (HLVLLHGWGL…KAAHAPFVSH (227 aa)). Residues tryptophan 22, 82-83 (SL), and 143-147 (FLALQ) each bind substrate. The active-site Nucleophile is serine 82. Residues aspartate 207 and histidine 235 contribute to the active site. A substrate-binding site is contributed by histidine 235.

The protein belongs to the AB hydrolase superfamily. Carboxylesterase BioH family. Monomer.

The protein localises to the cytoplasm. The enzyme catalyses 6-carboxyhexanoyl-[ACP] methyl ester + H2O = 6-carboxyhexanoyl-[ACP] + methanol + H(+). The protein operates within cofactor biosynthesis; biotin biosynthesis. Functionally, the physiological role of BioH is to remove the methyl group introduced by BioC when the pimeloyl moiety is complete. It allows to synthesize pimeloyl-ACP via the fatty acid synthetic pathway through the hydrolysis of the ester bonds of pimeloyl-ACP esters. The polypeptide is Pimeloyl-[acyl-carrier protein] methyl ester esterase (Klebsiella pneumoniae subsp. pneumoniae (strain ATCC 700721 / MGH 78578)).